Reading from the N-terminus, the 1062-residue chain is Protein P1-P2 (1062 aa).

Positions 1–20 (MNRFTAYAALFFIFSLCSTA) are cleaved as a signal peptide. A run of 3 helical transmembrane segments spans residues 121–141 (AASVTLWAIISIWFGLYWTLA), 144–164 (ITLFLWTFSIEALCLILLGCI), and 172–192 (ALSLSEHLPVFLFMSPLKIIW). The region spanning 207–399 (VEGYKGFSVP…GITSPNYVFE (193 aa)) is the Peptidase S39 domain. Active-site for protease activity residues include His-255, Asp-286, and Ser-354. Residues 456 to 557 (TNAPAEKTAQ…AEAQTKQTRK (102 aa)) are disordered. Over residues 463–484 (TAQTNSAEKTAPSTSAEKTAPT) the composition is skewed to polar residues. Residues 497–511 (QNKRQLRHPRRRYKR) are compositionally biased toward basic residues. Positions 541–553 (QGVSESPAEAQTK) are enriched in polar residues. A RdRp catalytic domain is found at 859 to 974 (EHTRPTDCSG…APNSDLEEYK (116 aa)).

In terms of processing, specific enzymatic cleavages in vivo yield mature proteins. The protease probably cleaves itself and releases the RdRp (Potential). Cleavages have been shown in the P1 protein, but since the N-terminus containing the serine protease is shared between P1 and P1-P2, cleavages should also occur within the P1-P2 protein.

It is found in the membrane. It carries out the reaction RNA(n) + a ribonucleoside 5'-triphosphate = RNA(n+1) + diphosphate. Its function is as follows. Precursor from which the RNA-dependent RNA polymerase (RdRp) is probably released. RNA-dependent RNA polymerase plays an essential role in virus replication (Potential). This is Protein P1-P2 from Solanum tuberosum (Potato).